A 267-amino-acid chain; its full sequence is Indole-3-glycerol phosphate synthase (267 aa).

The protein belongs to the TrpC family.

The catalysed reaction is 1-(2-carboxyphenylamino)-1-deoxy-D-ribulose 5-phosphate + H(+) = (1S,2R)-1-C-(indol-3-yl)glycerol 3-phosphate + CO2 + H2O. It functions in the pathway amino-acid biosynthesis; L-tryptophan biosynthesis; L-tryptophan from chorismate: step 4/5. The protein is Indole-3-glycerol phosphate synthase of Dichelobacter nodosus (strain VCS1703A).